A 98-amino-acid polypeptide reads, in one-letter code: Small ribosomal subunit protein bS6 (98 aa).

The protein belongs to the bacterial ribosomal protein bS6 family.

Its function is as follows. Binds together with bS18 to 16S ribosomal RNA. In Limosilactobacillus reuteri (strain DSM 20016) (Lactobacillus reuteri), this protein is Small ribosomal subunit protein bS6.